The primary structure comprises 350 residues: Ribosomal RNA large subunit methyltransferase M (350 aa).

S-adenosyl-L-methionine contacts are provided by residues 217-220 (APGG), D236, D256, and D272. The active-site Proton acceptor is K301.

It belongs to the class I-like SAM-binding methyltransferase superfamily. RNA methyltransferase RlmE family. RlmM subfamily. As to quaternary structure, monomer.

The protein resides in the cytoplasm. The enzyme catalyses cytidine(2498) in 23S rRNA + S-adenosyl-L-methionine = 2'-O-methylcytidine(2498) in 23S rRNA + S-adenosyl-L-homocysteine + H(+). In terms of biological role, catalyzes the 2'-O-methylation at nucleotide C2498 in 23S rRNA. The chain is Ribosomal RNA large subunit methyltransferase M from Cellvibrio japonicus (strain Ueda107) (Pseudomonas fluorescens subsp. cellulosa).